The chain runs to 331 residues: tRNA N6-adenosine threonylcarbamoyltransferase (331 aa).

A divalent metal cation-binding residues include His-108, His-112, and Tyr-129. Substrate contacts are provided by residues Tyr-129 to Gly-133, Asp-161, Gly-176, Glu-180, and Asn-261. Position 289 (Asp-289) interacts with a divalent metal cation.

It belongs to the KAE1 / TsaD family. Component of the EKC/KEOPS complex composed of at least BUD32, CGI121, GON7, KAE1 and PCC1; the whole complex dimerizes. Requires a divalent metal cation as cofactor.

It is found in the cytoplasm. The protein resides in the nucleus. It catalyses the reaction L-threonylcarbamoyladenylate + adenosine(37) in tRNA = N(6)-L-threonylcarbamoyladenosine(37) in tRNA + AMP + H(+). Functionally, component of the EKC/KEOPS complex that is required for the formation of a threonylcarbamoyl group on adenosine at position 37 (t(6)A37) in tRNAs that read codons beginning with adenine. The complex is probably involved in the transfer of the threonylcarbamoyl moiety of threonylcarbamoyl-AMP (TC-AMP) to the N6 group of A37. KAE1 likely plays a direct catalytic role in this reaction, but requires other protein(s) of the complex to fulfill this activity. The EKC/KEOPS complex also promotes both telomere uncapping and telomere elongation. The complex is required for efficient recruitment of transcriptional coactivators. This Encephalitozoon cuniculi (strain GB-M1) (Microsporidian parasite) protein is tRNA N6-adenosine threonylcarbamoyltransferase.